The following is a 294-amino-acid chain: MNGVINIYKNTGMTSFDVVAMVRRVAKMKKVGHTGTLDPAASGVLPVCLGKATKIIDYIMENKKVYRVNLKLGMVTDTYDLEGEVLREEDASHITKDEILNCINSFVGTIDQVPPMYSALKQNGVRLYELARQGIEVHREARKITIYSIENIKIESNDNIQMDVCCSKGTYIRSLCYDIGEKLNVGATMTALERIQNGTFTKEEAINIEDLTEELLEKHIISIEKALDSFEKITVNEKFGKLLRNGVKVFDNRMYSEEVEFNKLYRVYEDNGVFLGLGKRDEKGFKLEKLLIEE.

Residue D38 is the Nucleophile of the active site.

This sequence belongs to the pseudouridine synthase TruB family. Type 1 subfamily.

It carries out the reaction uridine(55) in tRNA = pseudouridine(55) in tRNA. Its function is as follows. Responsible for synthesis of pseudouridine from uracil-55 in the psi GC loop of transfer RNAs. The chain is tRNA pseudouridine synthase B from Clostridium perfringens (strain 13 / Type A).